Reading from the N-terminus, the 308-residue chain is Tyrosine recombinase XerD (308 aa).

The 85-residue stretch at 13–97 (PSSTEAIQRF…VFKRFFQWAL (85 aa)) folds into the Core-binding (CB) domain. The Tyr recombinase domain occupies 118–302 (RVPKTLSEAQ…ARERLRTLHA (185 aa)). Residues arginine 158, lysine 183, histidine 254, arginine 257, and histidine 280 contribute to the active site. Catalysis depends on tyrosine 289, which acts as the O-(3'-phospho-DNA)-tyrosine intermediate.

Belongs to the 'phage' integrase family. XerD subfamily. In terms of assembly, forms a cyclic heterotetrameric complex composed of two molecules of XerC and two molecules of XerD.

It localises to the cytoplasm. Its function is as follows. Site-specific tyrosine recombinase, which acts by catalyzing the cutting and rejoining of the recombining DNA molecules. The XerC-XerD complex is essential to convert dimers of the bacterial chromosome into monomers to permit their segregation at cell division. It also contributes to the segregational stability of plasmids. In Ralstonia nicotianae (strain ATCC BAA-1114 / GMI1000) (Ralstonia solanacearum), this protein is Tyrosine recombinase XerD.